Here is a 481-residue protein sequence, read N- to C-terminus: Heat stress transcription factor A-1b (481 aa).

Over residues 1-16 the composition is skewed to low complexity; the sequence is MESVPESVPSPNSNTP. Residues 1 to 23 form a disordered region; the sequence is MESVPESVPSPNSNTPSIPPPVN. A DNA-binding region spans residues 25–119; that stretch reads VPPFLSKTYD…LLKSIVRRKP (95 aa). The segment at 138-204 is hydrophobic repeat HR-A/B; the sequence is ACVEVGKFGI…QMMSFLAKAV (67 aa). Over residues 213–227 the composition is skewed to polar residues; that stretch reads LVQQNNNDGNRQIPG. The disordered stretch occupies residues 213 to 244; the sequence is LVQQNNNDGNRQIPGSNKKRRLPVDEQENRGD. Residues 229-233 carry the Nuclear localization signal motif; it reads NKKRR. Basic and acidic residues predominate over residues 234-243; the sequence is LPVDEQENRG. An AHA motif is present at residues 418-427; that stretch reads DPFWEQFFSV. The Nuclear export signal motif lies at 467–474; sequence LTEQMGLL.

This sequence belongs to the HSF family. Class A subfamily. Homotrimer. Binds to HSBP. Post-translationally, exhibits temperature-dependent phosphorylation.

It localises to the cytoplasm. The protein resides in the nucleus. Its function is as follows. Transcriptional activator that specifically binds DNA sequence 5'-AGAAnnTTCT-3' known as heat shock promoter elements (HSE). This is Heat stress transcription factor A-1b (HSFA1B) from Arabidopsis thaliana (Mouse-ear cress).